A 284-amino-acid polypeptide reads, in one-letter code: Putative mitochondrial carrier protein PET8 (284 aa).

Solcar repeat units follow at residues 2–75 (NTFF…MKVK), 92–178 (IDTT…LKKT), and 192–271 (KGAI…VHSL). A run of 6 helical transmembrane segments spans residues 5–25 (FLSL…FFPI), 50–70 (GLGS…ISYD), 98–118 (MLSS…AEVV), 153–169 (GWST…CIQF), 194–214 (AICG…LDFL), and 252–272 (MWIS…HSLL).

The protein belongs to the mitochondrial carrier (TC 2.A.29) family.

It is found in the mitochondrion inner membrane. This is Putative mitochondrial carrier protein PET8 (PET8) from Saccharomyces cerevisiae (strain ATCC 204508 / S288c) (Baker's yeast).